Consider the following 1453-residue polypeptide: MIVLTLCLFLVLYNSVICTSNNECVQVNVTQLPGNENIIRDFLFQNFKEEGTVVVGGYYPTEVWYNCSRTARTQAFKTFSNIHAFYFDMEAMENSTGDARGKPLLVHVHGNPVSIIVYISAYRHDVQGRPKLKHGLLCITKNSTTDYDRFTANQWRDICLGEDRKIPFSVVPTDNGTKLFGLEWNDDYVTAYISDDSHYLNINNNWFNNVTLLYSRSSTATWQHSAAYVYQGVSNFTYYKLNNTNGLKSYELCEDYEYCTGYATNVFAPTPGGYIPEGFSFNNWFMLTNSSTFVSGRFVTNQPLLVNCLWPVPSFGVAAQEFCFEGAQFSQCNGVSLNNTVDVIRFNLNFTTDVQSGMGATVFSLNTTGGVILDISCYNDTVSESSFYSYGEIPFGVIDGPRYCYVLYNGTALKYLGTLPPSVKEIAISKWGHFYINGYNFFSTFPIDCISFNLTTGASGAFWTIAYTSYTEALVQVENTAIKKVTYCNSHVNSIKCSQLTANLQNGFYPVASSEVGLVNKSVVLLPSFYSHTSVNITIDLGMRRSGYGQPVASSLSNISLPMQDNNTDVYCIRSNQFSFYVHSNCKSASWDNIFNSACTDVLEATAVIKTGTCPFSFDKLNNYLTFNKFCLSLNPTGANCKFDVVARTRTNEQGVGSLYVIYEEGDNIVGVPSDNSGLHDLSVLHLDSCTDYNIYGRNGVGIIRKTNSTLLSGLYYTSLSGDLLGFKNVSDGVVYSVTPCEVSAQAAVIDGAIVGAMTSINSELLGLTHWTTTPNFYYYSIYNYTNERVRGTVTDSNDVDCEPIITYSNIGVCKNGALVFINVTHSDGDVQPISTGNVTIPTNFTISVQVEYIQVYTTPVSIDCSRYVCNGNSRCNKLLTQYVSACHTIEQALAMGARLENMEIDSMLFVSENALKLASVEAFNSTDNLDPIYREWPNIGGSWLGGLKDILPSHNSKRKYRSAIEDLLFDKVVTSGLGTVDEDYKRCTGGYDIADLVCAQYYNGIMVLPGVANDDKMAMYTASLAGGITLGALGGGAVSIPFAVAVQARLNYVALQTDVLNKNQQILANAFNQAIGNITQAFGNVNDAIHQTSKGLATVAKALAKVQDVVNTQGQALSHLTVQLQNNFQAISSSISDIYNRLDELSADAQVDRLITGRLTALNAFVSQTLTRQAEVRASRQLAKDKVNECVRSQSQRFGFCGNGTHLFSLANAAPNGMIFFHTVLLPTAYETVTAWSGICASDGNRTFGLVVKDVQLTLFRNLDYKFYLTPRTMYQPRVATSSDFVQIEGCDVLFVNATVIELPSIIPDYIDINQTVQDILENFRPNWTVPELPLDIFNATYLNLTGEINDLEFRSEKLHNTTLELATLIDNINNTLVNLEWLNRIETYVKWPWYVWLLIGLVVIFCIPLLLFCCCSTGCCGCFGCIGSCCHSMCSRRQFESYEPIEKVHVH.

The first 31 residues, 1–31, serve as a signal peptide directing secretion; it reads MIVLTLCLFLVLYNSVICTSNNECVQVNVTQ. Residues 32-780 form an S1 region; it reads LPGNENIIRD…WTTTPNFYYY (749 aa). At 32–1394 the chain is on the virion surface side; it reads LPGNENIIRD…NRIETYVKWP (1363 aa). The interval 661–805 is interaction with host ANPEP; sequence VIYEEGDNIV…DSNDVDCEPI (145 aa). The tract at residues 781–1453 is S2; it reads SIYNYTNERV…YEPIEKVHVH (673 aa). Positions 1026–1047 are fusion peptide; the sequence is AGGITLGALGGGAVSIPFAVAV. The interval 1041–1160 is heptad repeat 1 (HR1); that stretch reads IPFAVAVQAR…QVDRLITGRL (120 aa). 2 coiled-coil regions span residues 1108–1152 and 1342–1384; these read QDVV…DAQV and TYLN…LEWL. The interval 1309–1406 is heptad repeat 2 (HR2); it reads PDYIDINQTV…VWLLIGLVVI (98 aa). A helical transmembrane segment spans residues 1395-1414; sequence WYVWLLIGLVVIFCIPLLLF. Over 1415–1453 the chain is Intravirion; the sequence is CCCSTGCCGCFGCIGSCCHSMCSRRQFESYEPIEKVHVH. The KxHxx signature appears at 1449–1453; sequence KVHVH.

Belongs to the alphacoronaviruses spike protein family. As to quaternary structure, homotrimer. During virus morphogenesis, found in a complex with M and HE proteins. Interacts with host ANPEP.

The protein localises to the virion membrane. The protein resides in the host endoplasmic reticulum-Golgi intermediate compartment membrane. S1 region attaches the virion to the cell membrane by interacting with host ANPEP/aminopeptidase N, initiating the infection. Binding to the receptor probably induces conformational changes in the S glycoprotein unmasking the fusion peptide of S2 region and activating membranes fusion. S2 region belongs to the class I viral fusion protein. Under the current model, the protein has at least 3 conformational states: pre-fusion native state, pre-hairpin intermediate state, and post-fusion hairpin state. During viral and target cell membrane fusion, the coiled coil regions (heptad repeats) regions assume a trimer-of-hairpins structure, positioning the fusion peptide in close proximity to the C-terminal region of the ectodomain. The formation of this structure appears to drive apposition and subsequent fusion of viral and target cell membranes. This Canis lupus familiaris (Dog) protein is Spike glycoprotein.